Consider the following 382-residue polypeptide: Membrane protein MLC1 (382 aa).

The span at 1–28 (MTREGQFREELGYDRMPTLERGRQDAGR) shows a compositional bias: basic and acidic residues. The tract at residues 1–43 (MTREGQFREELGYDRMPTLERGRQDAGRQDPGSYTPDSKPKDL) is disordered. Transmembrane regions (helical) follow at residues 58-78 (WVFS…SLYL), 88-107 (YLRC…FAVG), 117-137 (FQIL…WFGC), and 148-168 (INFN…TVII). Phosphoserine is present on residues serine 183, serine 185, and serine 188. The next 4 membrane-spanning stretches (helical) occupy residues 205–225 (SVVE…ALNV), 234–254 (LSVT…ASHV), 263–283 (LVEV…TASG), and 309–329 (LLLL…GTAI).

Interacts with ATP1B1. Part of a complex containing ATP1B1, TRPV4, AQP4 and HEPACAM.

Its subcellular location is the membrane. It localises to the cell membrane. The protein resides in the cytoplasm. The protein localises to the perinuclear region. It is found in the endoplasmic reticulum. Transmembrane protein mainly expressed in brain astrocytes that may play a role in transport across the blood-brain and brain-cerebrospinal fluid barriers. Regulates the response of astrocytes to hypo-osmosis by promoting calcium influx. May function as regulatory protein of membrane protein complexes such as ion channels. The protein is Membrane protein MLC1 of Mus musculus (Mouse).